We begin with the raw amino-acid sequence, 596 residues long: Merlin (596 aa).

Ser-13 bears the Phosphoserine mark. In terms of domain architecture, FERM spans 22 to 311 (FTVRIVTMDA…GNHDLFMRRR (290 aa)). Residue Ser-518 is modified to Phosphoserine; by PAK. The segment at 560-580 (VLHSESSDRGGPSSKHNTIKK) is disordered.

Interacts with NHERF1, HGS and AGAP2. Interacts with SGSM3. Interacts (via FERM domain) with MPP1. Interacts with LAYN. Interacts with WWC1. Interacts with the CUL4A-RBX1-DDB1-VprBP/DCAF1 E3 ubiquitin-protein ligase complex. The unphosphorylated form interacts (via FERM domain) with VPRBP/DCAF1. Interacts (via FERM domain) with NOP53; the interaction is direct. Interacts with SCHIP1; the interaction is direct. Phosphorylation of Ser-518 inhibits nuclear localization by disrupting the intramolecular association of the FERM domain with the C-terminal tail. The dephosphorylation of Ser-518 favors the interaction with NOP53. Post-translationally, ubiquitinated by the CUL4A-RBX1-DDB1-DCAF1/VprBP E3 ubiquitin-protein ligase complex for ubiquitination and subsequent proteasome-dependent degradation.

The protein localises to the cell membrane. The protein resides in the cell projection. It localises to the cytoplasm. Its subcellular location is the cytoskeleton. It is found in the nucleus. In terms of biological role, probable regulator of the Hippo/SWH (Sav/Wts/Hpo) signaling pathway, a signaling pathway that plays a pivotal role in tumor suppression by restricting proliferation and promoting apoptosis. Along with WWC1 can synergistically induce the phosphorylation of LATS1 and LATS2 and can probably function in the regulation of the Hippo/SWH (Sav/Wts/Hpo) signaling pathway. May act as a membrane stabilizing protein. May inhibit PI3 kinase by binding to AGAP2 and impairing its stimulating activity. Suppresses cell proliferation and tumorigenesis by inhibiting the CUL4A-RBX1-DDB1-VprBP/DCAF1 E3 ubiquitin-protein ligase complex. Plays a role in lens development and is required for complete fiber cell terminal differentiation, maintenance of cell polarity and separation of the lens vesicle from the corneal epithelium. This Mus musculus (Mouse) protein is Merlin (Nf2).